The sequence spans 171 residues: Large ribosomal subunit protein uL24 (171 aa).

A large ribosomal subunit protein uL24 region spans residues 1 to 124 (MNIKTGDTVV…AKPAKTKAEK (124 aa)). The segment at 108–171 (GQTLDKAAKP…SVQKKGASGK (64 aa)) is disordered. Residues 125 to 171 (VEKAATSSTDKPAKVTKAAKEAKPVKAVKSQKVEKNTSVQKKGASGK) are unknown.

It belongs to the universal ribosomal protein uL24 family. In terms of assembly, part of the 50S ribosomal subunit.

In terms of biological role, one of two assembly initiator proteins, it binds directly to the 5'-end of the 23S rRNA, where it nucleates assembly of the 50S subunit. Its function is as follows. One of the proteins that surrounds the polypeptide exit tunnel on the outside of the subunit. This is Large ribosomal subunit protein uL24 from Acholeplasma laidlawii (strain PG-8A).